The chain runs to 161 residues: MPSFDIVSKVDMQEVDNAVNQTIKEIAQRYDFKGSKSEITQEKDTVKLLSEDDFRLKAIIDILQSKFIKRGISVKALQYGKVENASGGMVRQIITIQQGISKEKGKEINNVIKETKLKVQSQIQEDQLRVTGKNIDDLQEVIQLLKGKDLGVELQFVNFRQ.

This sequence belongs to the YajQ family.

Its function is as follows. Nucleotide-binding protein. This Geotalea uraniireducens (strain Rf4) (Geobacter uraniireducens) protein is Nucleotide-binding protein Gura_0717.